An 86-amino-acid chain; its full sequence is UPF0297 protein SSP1144 (86 aa).

It belongs to the UPF0297 family.

The protein is UPF0297 protein SSP1144 of Staphylococcus saprophyticus subsp. saprophyticus (strain ATCC 15305 / DSM 20229 / NCIMB 8711 / NCTC 7292 / S-41).